A 394-amino-acid polypeptide reads, in one-letter code: Putative 8-amino-7-oxononanoate synthase (394 aa).

Arg-21 is a substrate binding site. 107-108 (GY) contacts pyridoxal 5'-phosphate. Residue His-132 participates in substrate binding. Pyridoxal 5'-phosphate-binding positions include Ser-180, 205–208 (DEAH), and 236–239 (TLSK). N6-(pyridoxal phosphate)lysine is present on Lys-239. Residue Thr-361 coordinates substrate.

The protein belongs to the class-II pyridoxal-phosphate-dependent aminotransferase family. BioF subfamily. Homodimer. The cofactor is pyridoxal 5'-phosphate.

The catalysed reaction is 6-carboxyhexanoyl-[ACP] + L-alanine + H(+) = (8S)-8-amino-7-oxononanoate + holo-[ACP] + CO2. It participates in cofactor biosynthesis; biotin biosynthesis. Its function is as follows. Catalyzes the decarboxylative condensation of pimeloyl-[acyl-carrier protein] and L-alanine to produce 8-amino-7-oxononanoate (AON), [acyl-carrier protein], and carbon dioxide. In Acaryochloris marina (strain MBIC 11017), this protein is Putative 8-amino-7-oxononanoate synthase (bioF).